The primary structure comprises 127 residues: Small ribosomal subunit protein uS11 (127 aa).

The protein belongs to the universal ribosomal protein uS11 family. In terms of assembly, part of the 30S ribosomal subunit. Interacts with proteins S7 and S18. Binds to IF-3.

Its function is as follows. Located on the platform of the 30S subunit, it bridges several disparate RNA helices of the 16S rRNA. Forms part of the Shine-Dalgarno cleft in the 70S ribosome. In Rickettsia africae (strain ESF-5), this protein is Small ribosomal subunit protein uS11.